The sequence spans 338 residues: 6-phosphogluconolactonase (338 aa).

The protein belongs to the cycloisomerase 2 family.

It catalyses the reaction 6-phospho-D-glucono-1,5-lactone + H2O = 6-phospho-D-gluconate + H(+). Its pathway is carbohydrate degradation; pentose phosphate pathway; D-ribulose 5-phosphate from D-glucose 6-phosphate (oxidative stage): step 2/3. In terms of biological role, catalyzes the hydrolysis of 6-phosphogluconolactone to 6-phosphogluconate. The sequence is that of 6-phosphogluconolactonase from Blochmanniella floridana.